The sequence spans 1106 residues: Communication mutant protein F (1106 aa).

Residues 1–28 (MKIYKKNHFLKILIIFIYLSCNILKVNA) form the signal peptide. In terms of domain architecture, G8 spans 254-380 (TIWPNGVVPS…YHNTWSKLAS (127 aa)). Residues N267, N306, N512, N536, N677, N715, and N833 are each glycosylated (N-linked (GlcNAc...) asparagine).

It belongs to the comF family.

Its subcellular location is the secreted. The sequence is that of Communication mutant protein F (comF-1) from Dictyostelium discoideum (Social amoeba).